Reading from the N-terminus, the 630-residue chain is WD repeat-containing protein 26 homolog (630 aa).

Residues 1-13 (MQSTSSTSSGSCS) show a composition bias toward low complexity. The tract at residues 1 to 90 (MQSTSSTSSG…NNRENTSCSG (90 aa)) is disordered. A phosphoserine mark is found at serine 36 and serine 40. Composition is skewed to polar residues over residues 48–57 (PSGSSAATNG) and 66–75 (IVNNNGSSSR). The region spanning 96-128 (SNQEIIRLIGQYLHDVGLDKSVQTLMLESGCYL) is the LisH domain. Residues 129 to 190 (EHPSATKFRE…EHLDDGNPLD (62 aa)) enclose the CTLH domain. WD repeat units follow at residues 312 to 351 (DHCD…LTLK), 359 to 400 (QAQL…LVVK), 404 to 443 (SLED…VDSW), 445 to 482 (GVRV…SDFD), 485 to 524 (REPH…LVRR), 529 to 569 (RQSN…PLAK), and 572 to 612 (GHTK…SSAT). The disordered stretch occupies residues 604–630 (PKPNGSSATTESDDCSSSSSSSSWNMT). Residues 609-630 (SSATTESDDCSSSSSSSSWNMT) are compositionally biased toward low complexity.

It localises to the cytoplasm. It is found in the mitochondrion. G-beta-like protein involved in cell signal transduction. This chain is WD repeat-containing protein 26 homolog, found in Drosophila melanogaster (Fruit fly).